The following is a 211-amino-acid chain: Redox-sensing transcriptional repressor Rex (211 aa).

A DNA-binding region (H-T-H motif) is located at residues 17–56 (LYYRFVSSLKSKGIDRVNSKAISDALQIDSATIRRDFSYF). 91 to 96 (GVGNLG) is a binding site for NAD(+).

This sequence belongs to the transcriptional regulatory Rex family. In terms of assembly, homodimer.

It is found in the cytoplasm. Modulates transcription in response to changes in cellular NADH/NAD(+) redox state. In Staphylococcus aureus (strain Mu3 / ATCC 700698), this protein is Redox-sensing transcriptional repressor Rex.